Here is a 444-residue protein sequence, read N- to C-terminus: Phosphoribosylamine--glycine ligase (444 aa).

The ATP-grasp domain occupies Arg-109–Asn-324. Position 140 to 202 (Leu-140 to Thr-202) interacts with ATP. The Mg(2+) site is built by Gln-282, Glu-294, and Asn-296. 3 residues coordinate Mn(2+): Gln-282, Glu-294, and Asn-296.

Belongs to the GARS family. Requires Mg(2+) as cofactor. The cofactor is Mn(2+).

The catalysed reaction is 5-phospho-beta-D-ribosylamine + glycine + ATP = N(1)-(5-phospho-beta-D-ribosyl)glycinamide + ADP + phosphate + H(+). It functions in the pathway purine metabolism; IMP biosynthesis via de novo pathway; N(1)-(5-phospho-D-ribosyl)glycinamide from 5-phospho-alpha-D-ribose 1-diphosphate: step 2/2. This is Phosphoribosylamine--glycine ligase from Methanocaldococcus jannaschii (strain ATCC 43067 / DSM 2661 / JAL-1 / JCM 10045 / NBRC 100440) (Methanococcus jannaschii).